The chain runs to 245 residues: Ribosomal RNA small subunit methyltransferase J (245 aa).

S-adenosyl-L-methionine is bound by residues 94–95 (RD), 110–111 (ER), and aspartate 164.

The protein belongs to the methyltransferase superfamily. RsmJ family.

The protein resides in the cytoplasm. It catalyses the reaction guanosine(1516) in 16S rRNA + S-adenosyl-L-methionine = N(2)-methylguanosine(1516) in 16S rRNA + S-adenosyl-L-homocysteine + H(+). Functionally, specifically methylates the guanosine in position 1516 of 16S rRNA. In Dechloromonas aromatica (strain RCB), this protein is Ribosomal RNA small subunit methyltransferase J.